Here is a 208-residue protein sequence, read N- to C-terminus: N-(5'-phosphoribosyl)anthranilate isomerase (208 aa).

Belongs to the TrpF family.

The catalysed reaction is N-(5-phospho-beta-D-ribosyl)anthranilate = 1-(2-carboxyphenylamino)-1-deoxy-D-ribulose 5-phosphate. It functions in the pathway amino-acid biosynthesis; L-tryptophan biosynthesis; L-tryptophan from chorismate: step 3/5. In Staphylococcus haemolyticus (strain JCSC1435), this protein is N-(5'-phosphoribosyl)anthranilate isomerase.